The chain runs to 437 residues: Serine hydroxymethyltransferase 2 (437 aa).

Residues L125 and 129–131 (GHL) each bind (6S)-5,6,7,8-tetrahydrofolate. At K234 the chain carries N6-(pyridoxal phosphate)lysine.

Belongs to the SHMT family. As to quaternary structure, homodimer. It depends on pyridoxal 5'-phosphate as a cofactor.

Its subcellular location is the cytoplasm. It carries out the reaction (6R)-5,10-methylene-5,6,7,8-tetrahydrofolate + glycine + H2O = (6S)-5,6,7,8-tetrahydrofolate + L-serine. The protein operates within one-carbon metabolism; tetrahydrofolate interconversion. It functions in the pathway amino-acid biosynthesis; glycine biosynthesis; glycine from L-serine: step 1/1. In terms of biological role, catalyzes the reversible interconversion of serine and glycine with tetrahydrofolate (THF) serving as the one-carbon carrier. This reaction serves as the major source of one-carbon groups required for the biosynthesis of purines, thymidylate, methionine, and other important biomolecules. Also exhibits THF-independent aldolase activity toward beta-hydroxyamino acids, producing glycine and aldehydes, via a retro-aldol mechanism. The polypeptide is Serine hydroxymethyltransferase 2 (Mesorhizobium japonicum (strain LMG 29417 / CECT 9101 / MAFF 303099) (Mesorhizobium loti (strain MAFF 303099))).